The chain runs to 67 residues: Bowman-Birk type proteinase inhibitor 1 (67 aa).

Cystine bridges form between Cys-5-Cys-59, Cys-6-Cys-21, Cys-9-Cys-55, Cys-11-Cys-19, Cys-29-Cys-36, Cys-33-Cys-48, and Cys-38-Cys-46.

Belongs to the Bowman-Birk serine protease inhibitor family. As to quaternary structure, monomer. Although dimerization may occur in solution. As to expression, seed.

Its function is as follows. Inhibits trypsin but not chymotrypsin. The inhibitor consists of 2 domains and has 2 sites of interaction with trypsin. This is Bowman-Birk type proteinase inhibitor 1 from Dioclea glabra.